The following is a 429-amino-acid chain: 3-phosphoshikimate 1-carboxyvinyltransferase (429 aa).

3-phosphoshikimate is bound by residues lysine 23, serine 24, and arginine 28. Lysine 23 provides a ligand contact to phosphoenolpyruvate. Phosphoenolpyruvate contacts are provided by glycine 95 and arginine 123. 3-phosphoshikimate-binding residues include serine 168, glutamine 170, aspartate 316, and lysine 343. A phosphoenolpyruvate-binding site is contributed by glutamine 170. The active-site Proton acceptor is aspartate 316. Residues arginine 347 and arginine 389 each coordinate phosphoenolpyruvate.

This sequence belongs to the EPSP synthase family. Monomer.

Its subcellular location is the cytoplasm. The enzyme catalyses 3-phosphoshikimate + phosphoenolpyruvate = 5-O-(1-carboxyvinyl)-3-phosphoshikimate + phosphate. The protein operates within metabolic intermediate biosynthesis; chorismate biosynthesis; chorismate from D-erythrose 4-phosphate and phosphoenolpyruvate: step 6/7. Catalyzes the transfer of the enolpyruvyl moiety of phosphoenolpyruvate (PEP) to the 5-hydroxyl of shikimate-3-phosphate (S3P) to produce enolpyruvyl shikimate-3-phosphate and inorganic phosphate. This Bacillus cereus (strain 03BB102) protein is 3-phosphoshikimate 1-carboxyvinyltransferase.